Here is a 448-residue protein sequence, read N- to C-terminus: Probable D-serine dehydratase (448 aa).

Lys-119 carries the post-translational modification N6-(pyridoxal phosphate)lysine.

This sequence belongs to the serine/threonine dehydratase family. DsdA subfamily. Pyridoxal 5'-phosphate serves as cofactor.

The catalysed reaction is D-serine = pyruvate + NH4(+). This is Probable D-serine dehydratase from Pseudomonas aeruginosa (strain ATCC 15692 / DSM 22644 / CIP 104116 / JCM 14847 / LMG 12228 / 1C / PRS 101 / PAO1).